The chain runs to 121 residues: Ribosome-binding factor A (121 aa).

This sequence belongs to the RbfA family. In terms of assembly, monomer. Binds 30S ribosomal subunits, but not 50S ribosomal subunits or 70S ribosomes.

It localises to the cytoplasm. Its function is as follows. One of several proteins that assist in the late maturation steps of the functional core of the 30S ribosomal subunit. Associates with free 30S ribosomal subunits (but not with 30S subunits that are part of 70S ribosomes or polysomes). Required for efficient processing of 16S rRNA. May interact with the 5'-terminal helix region of 16S rRNA. This is Ribosome-binding factor A from Paraburkholderia xenovorans (strain LB400).